Consider the following 106-residue polypeptide: MLLATTPIIEGKRITTYYGIVSGETIIGANVFRDFFASIRDIVGGRSGSYEEVLREAKDTALKEMSEQARQMGANAVIGVDLDYETVGGSGSMLMVTASGTAVFLE.

It belongs to the UPF0145 family.

In Bacteroides fragilis (strain YCH46), this protein is UPF0145 protein BF0270.